A 64-amino-acid chain; its full sequence is Beta-defensin 5 (64 aa).

The signal sequence occupies residues 1 to 22 (MRLHHLLLVLLFLVLSAGSGFT). Glutamine 23 carries the post-translational modification Pyrrolidone carboxylic acid. Disulfide bonds link cysteine 31–cysteine 60, cysteine 38–cysteine 53, and cysteine 43–cysteine 61.

The protein belongs to the beta-defensin family. As to expression, neutrophilic granules. Alveolar macrophages.

The protein localises to the secreted. Functionally, has bactericidal activity. Active against E.coli ML35 but not against S.aureus 502A. The sequence is that of Beta-defensin 5 (DEFB5) from Bos taurus (Bovine).